We begin with the raw amino-acid sequence, 585 residues long: Proline--tRNA ligase (585 aa).

Residue Lys-173 forms an Isoglutamyl lysine isopeptide (Lys-Gln) (interchain with Q-Cter in protein Pup) linkage.

This sequence belongs to the class-II aminoacyl-tRNA synthetase family. ProS type 1 subfamily. Homodimer.

It is found in the cytoplasm. It catalyses the reaction tRNA(Pro) + L-proline + ATP = L-prolyl-tRNA(Pro) + AMP + diphosphate. Its function is as follows. Catalyzes the attachment of proline to tRNA(Pro) in a two-step reaction: proline is first activated by ATP to form Pro-AMP and then transferred to the acceptor end of tRNA(Pro). As ProRS can inadvertently accommodate and process non-cognate amino acids such as alanine and cysteine, to avoid such errors it has two additional distinct editing activities against alanine. One activity is designated as 'pretransfer' editing and involves the tRNA(Pro)-independent hydrolysis of activated Ala-AMP. The other activity is designated 'posttransfer' editing and involves deacylation of mischarged Ala-tRNA(Pro). The misacylated Cys-tRNA(Pro) is not edited by ProRS. In Mycolicibacterium smegmatis (strain ATCC 700084 / mc(2)155) (Mycobacterium smegmatis), this protein is Proline--tRNA ligase (proS).